A 295-amino-acid polypeptide reads, in one-letter code: MITELHGIDIRENEPLKHYTYTKVGGPADFLAFPRNHYELSRIVAYANKENMPWLVLGNASNLIVRDGGIRGFVIMFDKLNAVHLNGYTLKAEAGANLIETTKIAKFHSLTGFEFACGIPGSIGGAVFMNAGAYGGEISHIFLSAKVLTPSGEIKTISARDMAFGYRHSAIQETGDIVISAKFALKPGNYDTISQEMNRLNHLRQLKQPLEFPSCGSVFKRPPGHFAGQLIMEANLKGHRIGGVEVSEKHAGFMINVADGTAKDYEDLIAYVIETVENHSGVKLEPEVRIIGENL.

Residues 23–188 (KVGGPADFLA…ISAKFALKPG (166 aa)) enclose the FAD-binding PCMH-type domain. The active site involves arginine 167. Serine 217 serves as the catalytic Proton donor. Residue glutamate 287 is part of the active site.

This sequence belongs to the MurB family. Requires FAD as cofactor.

Its subcellular location is the cytoplasm. It carries out the reaction UDP-N-acetyl-alpha-D-muramate + NADP(+) = UDP-N-acetyl-3-O-(1-carboxyvinyl)-alpha-D-glucosamine + NADPH + H(+). It functions in the pathway cell wall biogenesis; peptidoglycan biosynthesis. In terms of biological role, cell wall formation. This chain is UDP-N-acetylenolpyruvoylglucosamine reductase, found in Streptococcus pyogenes serotype M12 (strain MGAS9429).